The chain runs to 264 residues: Diphthine synthase (264 aa).

Residues Leu-9, Asp-84, Val-87, Ser-112–Ile-113, Leu-164, Ala-207, and His-232 each bind S-adenosyl-L-methionine.

The protein belongs to the diphthine synthase family. Homodimer.

It carries out the reaction 2-[(3S)-amino-3-carboxypropyl]-L-histidyl-[translation elongation factor 2] + 3 S-adenosyl-L-methionine = diphthine-[translation elongation factor 2] + 3 S-adenosyl-L-homocysteine + 3 H(+). It participates in protein modification; peptidyl-diphthamide biosynthesis. Functionally, S-adenosyl-L-methionine-dependent methyltransferase that catalyzes the trimethylation of the amino group of the modified target histidine residue in translation elongation factor 2 (EF-2), to form an intermediate called diphthine. The three successive methylation reactions represent the second step of diphthamide biosynthesis. The protein is Diphthine synthase of Methanothermobacter thermautotrophicus (strain ATCC 29096 / DSM 1053 / JCM 10044 / NBRC 100330 / Delta H) (Methanobacterium thermoautotrophicum).